The primary structure comprises 1478 residues: Fanconi anemia group D2 protein homolog (1478 aa).

Positions 33 to 53 are disordered; sequence NISVESSSGGSEENIPASQEH. Residues 35 to 45 show a composition bias toward low complexity; sequence SVESSSGGSEE. Lys-595 participates in a covalent cross-link: Glycyl lysine isopeptide (Lys-Gly) (interchain with G-Cter in ubiquitin). Disordered stretches follow at residues 896–918 and 1420–1478; these read NQNQ…PEPD and TPRS…SKCF. Residues 1429 to 1442 show a composition bias toward acidic residues; sequence ENSDDELPADDTSV. Positions 1468 to 1478 are enriched in basic residues; it reads RSKSSSRSKCF.

It belongs to the Fanconi anemia protein FANCD2 family. Homodimer; cannot be ubiquitinated and does not bind DNA. Part of a Fanci-Fancd2 heterodimeric complex that binds and scans dsDNA for DNA damage. Interacts with Fancl (via C-terminus). Monoubiquitinated by Fancl in response to ionising radiation.

It localises to the nucleus. Required for maintenance of chromosomal stability. Together with Fancl, and probably Fanci, involved in DNA repair of damage caused by agents that induce interstrand cross-links but not agents that cause double strand breaks. Required for S phase checkpoint activation in response to ionizing radiation induced DNA damage. This chain is Fanconi anemia group D2 protein homolog, found in Drosophila melanogaster (Fruit fly).